Here is a 237-residue protein sequence, read N- to C-terminus: Phosphoribosylaminoimidazole-succinocarboxamide synthase (237 aa).

Belongs to the SAICAR synthetase family.

It carries out the reaction 5-amino-1-(5-phospho-D-ribosyl)imidazole-4-carboxylate + L-aspartate + ATP = (2S)-2-[5-amino-1-(5-phospho-beta-D-ribosyl)imidazole-4-carboxamido]succinate + ADP + phosphate + 2 H(+). The protein operates within purine metabolism; IMP biosynthesis via de novo pathway; 5-amino-1-(5-phospho-D-ribosyl)imidazole-4-carboxamide from 5-amino-1-(5-phospho-D-ribosyl)imidazole-4-carboxylate: step 1/2. This is Phosphoribosylaminoimidazole-succinocarboxamide synthase from Listeria monocytogenes serotype 4a (strain HCC23).